Here is a 314-residue protein sequence, read N- to C-terminus: MPWTRRHLLTLEELSREEIDQIHATAAAFKRTLSRRVKKVPALRGKTIVNLFLEPSTRTRMAFDMAAKRLSADVISFDAASSSTTKGETLHDTAKNIQALGADMIVIRHAAAGSPLYLSRILDIPVINAGDGAHEHPTQGLLDTFTMKEHLGSLKGRKIVILGDILFSRVARSNIHALTKLGANVTLVGPATLVPHWFTDLGVEVSHDLRTALADAEVVMLLRIQHERQSSGHFPSLGEYTSMFGLNKTRASWLNPKAIIMHPGPINRGVEIDSDLADGDHSVILEQVNNGIAVRMAALYLCAGGQPENVAPIE.

2 residues coordinate carbamoyl phosphate: arginine 58 and threonine 59. An L-aspartate-binding site is contributed by lysine 86. Carbamoyl phosphate is bound by residues arginine 108, histidine 136, and glutamine 139. Residues arginine 169 and arginine 223 each contribute to the L-aspartate site. Carbamoyl phosphate is bound by residues glycine 264 and proline 265.

The protein belongs to the aspartate/ornithine carbamoyltransferase superfamily. ATCase family. Heterododecamer (2C3:3R2) of six catalytic PyrB chains organized as two trimers (C3), and six regulatory PyrI chains organized as three dimers (R2).

It carries out the reaction carbamoyl phosphate + L-aspartate = N-carbamoyl-L-aspartate + phosphate + H(+). The protein operates within pyrimidine metabolism; UMP biosynthesis via de novo pathway; (S)-dihydroorotate from bicarbonate: step 2/3. Catalyzes the condensation of carbamoyl phosphate and aspartate to form carbamoyl aspartate and inorganic phosphate, the committed step in the de novo pyrimidine nucleotide biosynthesis pathway. The sequence is that of Aspartate carbamoyltransferase catalytic subunit from Opitutus terrae (strain DSM 11246 / JCM 15787 / PB90-1).